We begin with the raw amino-acid sequence, 401 residues long: Tyrosine--tRNA ligase (401 aa).

The short motif at 45–54 (PTAPDLHLGH) is the 'HIGH' region element. The 'KMSKS' region motif lies at 230 to 234 (KMSKS). An ATP-binding site is contributed by Lys-233. The region spanning 339–399 (IWLAKALVEC…GKRKFAKLKV (61 aa)) is the S4 RNA-binding domain.

The protein belongs to the class-I aminoacyl-tRNA synthetase family. TyrS type 2 subfamily. Homodimer.

It localises to the cytoplasm. It carries out the reaction tRNA(Tyr) + L-tyrosine + ATP = L-tyrosyl-tRNA(Tyr) + AMP + diphosphate + H(+). Its function is as follows. Catalyzes the attachment of tyrosine to tRNA(Tyr) in a two-step reaction: tyrosine is first activated by ATP to form Tyr-AMP and then transferred to the acceptor end of tRNA(Tyr). The protein is Tyrosine--tRNA ligase of Campylobacter jejuni (strain RM1221).